A 331-amino-acid chain; its full sequence is Ornithine carbamoyltransferase (331 aa).

Residues 57–60, Q82, R106, and 133–136 each bind carbamoyl phosphate; these read STRT and HPTQ. L-ornithine-binding positions include N166, D230, and 234–235; that span reads SM. Residues 272–273 and R317 each bind carbamoyl phosphate; that span reads CL.

The protein belongs to the aspartate/ornithine carbamoyltransferase superfamily. OTCase family.

Its subcellular location is the cytoplasm. The catalysed reaction is carbamoyl phosphate + L-ornithine = L-citrulline + phosphate + H(+). It functions in the pathway amino-acid degradation; L-arginine degradation via ADI pathway; carbamoyl phosphate from L-arginine: step 2/2. Functionally, reversibly catalyzes the transfer of the carbamoyl group from carbamoyl phosphate (CP) to the N(epsilon) atom of ornithine (ORN) to produce L-citrulline. This is Ornithine carbamoyltransferase from Clostridium perfringens (strain SM101 / Type A).